The sequence spans 425 residues: Inhibin beta A chain (425 aa).

An N-terminal signal peptide occupies residues 1–20 (MPLLWLRGFLLASCWIIVRS). Residues 21 to 309 (SPTPGSEGHS…EDHPHRRRRR (289 aa)) constitute a propeptide that is removed on maturation. N-linked (GlcNAc...) asparagine glycosylation occurs at asparagine 165. Positions 260–289 (KKRKEEEGEGKKRDGEGGAGGDEEKEQSHR) are disordered. Residues 263–275 (KEEEGEGKKRDGE) are compositionally biased toward basic and acidic residues. 4 disulfides stabilise this stretch: cysteine 313/cysteine 321, cysteine 320/cysteine 390, cysteine 349/cysteine 422, and cysteine 353/cysteine 424.

It belongs to the TGF-beta family. In terms of assembly, dimeric, linked by one or more disulfide bonds. Inhibin A is a dimer of alpha/INHA and beta-A/INHBA. Activin A is a homodimer of beta-A/INHBA. Activin AB is a dimer of beta-A/INHBA and beta-B/INHBB. Interacts with FST and FSTL3; these interactions prevent activin A interaction to its type II receptor. Activin A interacts with ACVR2A. Activin A interacts with BMPR2. Inhibin A interacts with ACVR1; this interaction creates a non-signaling complex (NSC) that inhibits ACVR1-mediated BMP signaling. Inhibin A interacts with ACVR2A.

Its subcellular location is the secreted. Functionally, inhibins/activins are involved in regulating a number of diverse functions such as hypothalamic and pituitary hormone secretion, gonadal hormone secretion, germ cell development and maturation, erythroid differentiation, insulin secretion, nerve cell survival, embryonic axial development or bone growth, depending on their subunit composition. Its function is as follows. Activin A is a homodimer of INHBA that plays a role in several essential biological processes including embryonic development, stem cell maintenance and differentiation, haematopoiesis, cell proliferation and tissue fibrosis. Signals through type I (such as ACVR1B or ACVR1C) and type II receptors (such as ACVR2A, ACVR2B or BMPR2) which, upon ligand binding, phosphorylate SMAD2 and SMAD3 intracellular signaling mediators that form a complex with SMAD4, translocate to the nucleus and modulate gene expression. Can also activate alternative non-canonical intracellular signaling pathways including the p38 MAPK, extracellular signal-regulated kinases 1/2 (ERK1/2) and c-Jun N-terminal kinases (JNKs) to modulate cell migration and differentiation. Alternatively, promotes osteoblastic differentiation via ACVRL1-SMAD1/5/9 pathway. In addition, can engage the type I receptor ACVR1 to form an ACVR1-activin A-type II receptor non-signaling complex (NSC) that renders receptors unavailable for engagement with BMPs, hence resulting in an apparent inhibition of ACVR1-mediated BMP signaling. Inhibin A is a dimer of alpha/INHA and beta-A/INHBA that functions as a feedback regulator in the hypothalamic-pituitary-gonadal (HPG) axis. Inhibits the secretion of FSH from the anterior pituitary gland by acting on pituitary gonadotrope cells. Antagonizes activin A by binding to the proteoglycan, betaglycan, and forming a stable complex with and, thereby, sequestering type II activin receptors while excluding type I receptor. The polypeptide is Inhibin beta A chain (INHBA) (Ovis aries (Sheep)).